Here is a 96-residue protein sequence, read N- to C-terminus: Small ribosomal subunit protein bS6 (96 aa).

Belongs to the bacterial ribosomal protein bS6 family.

Its function is as follows. Binds together with bS18 to 16S ribosomal RNA. The sequence is that of Small ribosomal subunit protein bS6 from Streptococcus equi subsp. zooepidemicus (strain MGCS10565).